Consider the following 673-residue polypeptide: Glycine--tRNA ligase beta subunit (673 aa).

Belongs to the class-II aminoacyl-tRNA synthetase family. In terms of assembly, tetramer of two alpha and two beta subunits.

It localises to the cytoplasm. The catalysed reaction is tRNA(Gly) + glycine + ATP = glycyl-tRNA(Gly) + AMP + diphosphate. The polypeptide is Glycine--tRNA ligase beta subunit (Lactococcus lactis subsp. lactis (strain IL1403) (Streptococcus lactis)).